The chain runs to 340 residues: Guanine nucleotide-binding protein G(I)/G(S)/G(T) subunit beta-1 (340 aa).

The residue at position 2 (S2) is an N-acetylserine. Position 2 is a phosphoserine (S2). WD repeat units follow at residues 46–94, 95–140, 141–181, 182–223, 224–267, 268–309, and 310–340; these read RTRR…HAIP, LRSS…RELA, GHTG…TTFT, GHTG…QTFT, GHES…YSHD, NIIC…GVLA, and GHDNRVSCLGVTDDGMAVATGSWDSFLKIWN. H266 bears the Phosphohistidine mark.

The protein belongs to the WD repeat G protein beta family. In terms of assembly, g proteins are composed of 3 units, alpha, beta and gamma. The heterodimer formed by GNB1 and GNG2 interacts with ARHGEF5. The heterodimer formed by GNB1 and GNG2 interacts with GRK2. Forms a complex with GNAO1 and GNG3. Interacts with ARHGEF18 and RASD2. Forms complexes with TAS2R14 and G-proteins; these complexes play a role in the perception of bitterness. Component of the TAS2R14-GNAI1 complex, consisting of TAS2R14, GNAI1, GNB1 and GNG2. Component of the TAS2R14-GNAT3 complex, consisting of TAS2R14, GNAT3, GNB1 and GNG2. Component of the TAS2R14-GNAS2 complex, consisting of TAS2R14, GNAS2, GNB1 and GNG2. Post-translationally, phosphorylation at His-266 by NDKB contributes to G protein activation by increasing the high energetic phosphate transfer onto GDP.

Its function is as follows. Guanine nucleotide-binding proteins (G proteins) are involved as a modulator or transducer in various transmembrane signaling systems. The beta and gamma chains are required for the GTPase activity, for replacement of GDP by GTP, and for G protein-effector interaction. The polypeptide is Guanine nucleotide-binding protein G(I)/G(S)/G(T) subunit beta-1 (GNB1) (Bos taurus (Bovine)).